We begin with the raw amino-acid sequence, 612 residues long: uncharacterized protein (612 aa).

5 disordered regions span residues 46-113, 129-185, 313-360, 457-488, and 593-612; these read QQPQ…MVTP, QQYQ…TPTY, TKDG…GSTM, FSISGGGGSGGIPSQSGIIKKHKKPSGSSGYG, and NNTNNTNNTNNTNNNTVVTI. The span at 58–102 shows a compositional bias: low complexity; that stretch reads HQQIPISTQSTPNSTSSTTTTTTTTTSTTTAPTSNSKKSKTTPSN. Composition is skewed to polar residues over residues 103-113 and 129-138; these read GNKPTSGMVTP and QQYQPNSQLQ. Residues 143–169 show a composition bias toward low complexity; that stretch reads IIKKSSLSTTPNNINNNNNNNNNTNTI. Polar residues predominate over residues 175–185; sequence GGNNSAPTPTY. The segment covering 323–359 has biased composition (low complexity); sequence TTSSTSTSSSATSTTSSSTSSTTTTSSTSNSSTPGST.

This is an uncharacterized protein from Dictyostelium discoideum (Social amoeba).